The primary structure comprises 326 residues: Probable GTP 3',8-cyclase (326 aa).

Positions 6 to 235 (LYGRPVLSLR…NRPRYIIRTQ (230 aa)) constitute a Radical SAM core domain. Arg15 lines the GTP pocket. [4Fe-4S] cluster contacts are provided by Cys22, Cys26, and Cys29. Lys62 contributes to the GTP binding site. Gly66 contacts S-adenosyl-L-methionine. Thr92 is a binding site for GTP. S-adenosyl-L-methionine is bound at residue Ser116. A GTP-binding site is contributed by Lys153. [4Fe-4S] cluster-binding residues include Cys253 and Cys256. Residue 258–260 (RLR) participates in GTP binding. Cys270 is a binding site for [4Fe-4S] cluster.

This sequence belongs to the radical SAM superfamily. MoaA family. [4Fe-4S] cluster serves as cofactor.

It carries out the reaction GTP + AH2 + S-adenosyl-L-methionine = (8S)-3',8-cyclo-7,8-dihydroguanosine 5'-triphosphate + 5'-deoxyadenosine + L-methionine + A + H(+). Its pathway is cofactor biosynthesis; molybdopterin biosynthesis. Its function is as follows. Catalyzes the cyclization of GTP to (8S)-3',8-cyclo-7,8-dihydroguanosine 5'-triphosphate. In Thermoplasma volcanium (strain ATCC 51530 / DSM 4299 / JCM 9571 / NBRC 15438 / GSS1), this protein is Probable GTP 3',8-cyclase.